Reading from the N-terminus, the 369-residue chain is Anhydro-N-acetylmuramic acid kinase (369 aa).

Residue 12–19 (GTSMDGID) coordinates ATP.

Belongs to the anhydro-N-acetylmuramic acid kinase family.

It carries out the reaction 1,6-anhydro-N-acetyl-beta-muramate + ATP + H2O = N-acetyl-D-muramate 6-phosphate + ADP + H(+). The protein operates within amino-sugar metabolism; 1,6-anhydro-N-acetylmuramate degradation. It participates in cell wall biogenesis; peptidoglycan recycling. Its function is as follows. Catalyzes the specific phosphorylation of 1,6-anhydro-N-acetylmuramic acid (anhMurNAc) with the simultaneous cleavage of the 1,6-anhydro ring, generating MurNAc-6-P. Is required for the utilization of anhMurNAc either imported from the medium or derived from its own cell wall murein, and thus plays a role in cell wall recycling. This chain is Anhydro-N-acetylmuramic acid kinase, found in Shewanella sediminis (strain HAW-EB3).